The following is a 282-amino-acid chain: NADPH-dependent 7-cyano-7-deazaguanine reductase (282 aa).

88-90 (IES) contacts substrate. Position 90–91 (90–91 (SK)) interacts with NADPH. Cysteine 190 acts as the Thioimide intermediate in catalysis. Aspartate 197 serves as the catalytic Proton donor. Substrate is bound at residue 229 to 230 (HE). Position 258–259 (258–259 (RG)) interacts with NADPH.

It belongs to the GTP cyclohydrolase I family. QueF type 2 subfamily. As to quaternary structure, homodimer.

Its subcellular location is the cytoplasm. The enzyme catalyses 7-aminomethyl-7-carbaguanine + 2 NADP(+) = 7-cyano-7-deazaguanine + 2 NADPH + 3 H(+). It functions in the pathway tRNA modification; tRNA-queuosine biosynthesis. Functionally, catalyzes the NADPH-dependent reduction of 7-cyano-7-deazaguanine (preQ0) to 7-aminomethyl-7-deazaguanine (preQ1). The chain is NADPH-dependent 7-cyano-7-deazaguanine reductase from Salmonella paratyphi B (strain ATCC BAA-1250 / SPB7).